The chain runs to 256 residues: Pimeloyl-[acyl-carrier protein] methyl ester esterase (256 aa).

Residues 15 to 242 (HLVLLHGWGL…AAHAPFISHP (228 aa)) form the AB hydrolase-1 domain. Substrate-binding positions include Trp-22, 82–83 (SL), and 143–147 (FLALQ). Ser-82 serves as the catalytic Nucleophile. Active-site residues include Asp-207 and His-235. His-235 is a binding site for substrate.

It belongs to the AB hydrolase superfamily. Carboxylesterase BioH family. As to quaternary structure, monomer.

It localises to the cytoplasm. The enzyme catalyses 6-carboxyhexanoyl-[ACP] methyl ester + H2O = 6-carboxyhexanoyl-[ACP] + methanol + H(+). Its pathway is cofactor biosynthesis; biotin biosynthesis. In terms of biological role, the physiological role of BioH is to remove the methyl group introduced by BioC when the pimeloyl moiety is complete. It allows to synthesize pimeloyl-ACP via the fatty acid synthetic pathway through the hydrolysis of the ester bonds of pimeloyl-ACP esters. This Escherichia coli O81 (strain ED1a) protein is Pimeloyl-[acyl-carrier protein] methyl ester esterase.